The sequence spans 385 residues: Chaperone protein DnaJ (385 aa).

Residues 5–70 enclose the J domain; it reads DFYDVLGVSR…QSRAAYDQFG (66 aa). The CR-type zinc-finger motif lies at 143–221; that stretch reads GKKAQVRVPG…CHGAGRVEKE (79 aa). Cys156, Cys159, Cys173, Cys176, Cys195, Cys198, Cys209, and Cys212 together coordinate Zn(2+). CXXCXGXG motif repeat units follow at residues 156–163, 173–180, 195–202, and 209–216; these read CEVCTGTG, CPTCQGHG, CPTCHGRG, and CTNCHGAG.

The protein belongs to the DnaJ family. Homodimer. The cofactor is Zn(2+).

It localises to the cytoplasm. In terms of biological role, participates actively in the response to hyperosmotic and heat shock by preventing the aggregation of stress-denatured proteins and by disaggregating proteins, also in an autonomous, DnaK-independent fashion. Unfolded proteins bind initially to DnaJ; upon interaction with the DnaJ-bound protein, DnaK hydrolyzes its bound ATP, resulting in the formation of a stable complex. GrpE releases ADP from DnaK; ATP binding to DnaK triggers the release of the substrate protein, thus completing the reaction cycle. Several rounds of ATP-dependent interactions between DnaJ, DnaK and GrpE are required for fully efficient folding. Also involved, together with DnaK and GrpE, in the DNA replication of plasmids through activation of initiation proteins. The sequence is that of Chaperone protein DnaJ from Parvibaculum lavamentivorans (strain DS-1 / DSM 13023 / NCIMB 13966).